The following is a 478-amino-acid chain: tRNA(Ile)-lysidine synthase (478 aa).

27–32 is an ATP binding site; that stretch reads SGGSDS.

Belongs to the tRNA(Ile)-lysidine synthase family.

Its subcellular location is the cytoplasm. The catalysed reaction is cytidine(34) in tRNA(Ile2) + L-lysine + ATP = lysidine(34) in tRNA(Ile2) + AMP + diphosphate + H(+). Functionally, ligates lysine onto the cytidine present at position 34 of the AUA codon-specific tRNA(Ile) that contains the anticodon CAU, in an ATP-dependent manner. Cytidine is converted to lysidine, thus changing the amino acid specificity of the tRNA from methionine to isoleucine. The sequence is that of tRNA(Ile)-lysidine synthase from Rickettsia conorii (strain ATCC VR-613 / Malish 7).